The sequence spans 314 residues: R2-like ligand binding oxidase (314 aa).

Residues Glu-68, Glu-101, and His-104 each coordinate Mn(2+). Positions 71–162 form a cross-link, 3-(O4'-tyrosyl)-valine (Val-Tyr); the sequence is VTEDIQPFMS…AAQVRASVTY (92 aa). Glu-101 provides a ligand contact to Fe cation. Glu-167, Glu-202, and His-205 together coordinate Fe cation.

It belongs to the ribonucleoside diphosphate reductase small chain family. R2-like ligand binding oxidase subfamily. As to quaternary structure, homodimer. Fe cation serves as cofactor. Requires Mn(2+) as cofactor.

Functionally, probable oxidase that might be involved in lipid metabolism. The polypeptide is R2-like ligand binding oxidase (Mycobacterium tuberculosis (strain ATCC 25177 / H37Ra)).